The following is a 786-amino-acid chain: Endonuclease MutS2 (786 aa).

335–342 (GPNTGGKT) contributes to the ATP binding site. The 76-residue stretch at 711 to 786 (LDLRGERFEN…GLGVTVVELK (76 aa)) folds into the Smr domain.

This sequence belongs to the DNA mismatch repair MutS family. MutS2 subfamily. Homodimer. Binds to stalled ribosomes, contacting rRNA.

Functionally, endonuclease that is involved in the suppression of homologous recombination and thus may have a key role in the control of bacterial genetic diversity. Its function is as follows. Acts as a ribosome collision sensor, splitting the ribosome into its 2 subunits. Detects stalled/collided 70S ribosomes which it binds and splits by an ATP-hydrolysis driven conformational change. Acts upstream of the ribosome quality control system (RQC), a ribosome-associated complex that mediates the extraction of incompletely synthesized nascent chains from stalled ribosomes and their subsequent degradation. Probably generates substrates for RQC. The sequence is that of Endonuclease MutS2 from Bacillus anthracis (strain A0248).